A 214-amino-acid polypeptide reads, in one-letter code: ATP phosphoribosyltransferase (214 aa).

The protein belongs to the ATP phosphoribosyltransferase family. Short subfamily. As to quaternary structure, heteromultimer composed of HisG and HisZ subunits.

The protein localises to the cytoplasm. It carries out the reaction 1-(5-phospho-beta-D-ribosyl)-ATP + diphosphate = 5-phospho-alpha-D-ribose 1-diphosphate + ATP. It functions in the pathway amino-acid biosynthesis; L-histidine biosynthesis; L-histidine from 5-phospho-alpha-D-ribose 1-diphosphate: step 1/9. Catalyzes the condensation of ATP and 5-phosphoribose 1-diphosphate to form N'-(5'-phosphoribosyl)-ATP (PR-ATP). Has a crucial role in the pathway because the rate of histidine biosynthesis seems to be controlled primarily by regulation of HisG enzymatic activity. This is ATP phosphoribosyltransferase from Deinococcus deserti (strain DSM 17065 / CIP 109153 / LMG 22923 / VCD115).